Reading from the N-terminus, the 203-residue chain is Akirin-2 (203 aa).

Ser18 and Ser21 each carry phosphoserine. Residues 22–27 (PKRRRC) carry the Nuclear localization signal motif. Position 57 is a phosphoserine (Ser57). An SYVS motif motif is present at residues 200-203 (SYVS).

The protein belongs to the akirin family. As to quaternary structure, homodimer. Interacts with IPO9; the interaction is direct. Associates (via SYVS motif) with 20S and 26S proteasomes. Interacts with SMARCD1; promoting SWI/SNF complex recruitment. Interacts with NFKBIZ. Interacts with YWHAB. Post-translationally, polyubiquitinated. Polyubiquitination is dependent of UBR5 that extends pre-ubiquitinated AKIRIN2. Widely expressed with the highest expression in peripheral blood leukocytes.

It is found in the nucleus. It localises to the cytoplasm. The protein localises to the membrane. Its function is as follows. Molecular adapter that acts as a bridge between a variety of multiprotein complexes, and which is involved in embryonic development, immunity, myogenesis and brain development. Plays a key role in nuclear protein degradation by promoting import of proteasomes into the nucleus: directly binds to fully assembled 20S proteasomes at one end and to nuclear import receptor IPO9 at the other end, bridging them together and mediating the import of pre-assembled proteasome complexes through the nuclear pore. Involved in innate immunity by regulating the production of interleukin-6 (IL6) downstream of Toll-like receptor (TLR): acts by bridging the NF-kappa-B inhibitor NFKBIZ and the SWI/SNF complex, leading to promote induction of IL6. Also involved in adaptive immunity by promoting B-cell activation. Involved in brain development: required for the survival and proliferation of cerebral cortical progenitor cells. Involved in myogenesis: required for skeletal muscle formation and skeletal development, possibly by regulating expression of muscle differentiation factors. Also plays a role in facilitating interdigital tissue regression during limb development. The protein is Akirin-2 of Homo sapiens (Human).